The chain runs to 451 residues: Tubulin alpha-1B chain (451 aa).

An MREC motif motif is present at residues 1–4; sequence MREC. Residues Gly-10, Gln-11, Ala-12, and Gln-15 each coordinate GTP. Position 40 is an N6,N6,N6-trimethyllysine; alternate (Lys-40). Lys-40 is modified (N6-acetyllysine; alternate). Ser-48 carries the phosphoserine modification. GTP-binding residues include Glu-71, Ala-99, Ser-140, Gly-143, Gly-144, Thr-145, Gly-146, Thr-179, Glu-183, Asn-206, Tyr-224, and Asn-228. A Mg(2+)-binding site is contributed by Glu-71. Ser-232 carries the post-translational modification Phosphoserine. Leu-252 provides a ligand contact to GTP. The active site involves Glu-254. The residue at position 282 (Tyr-282) is a 3'-nitrotyrosine. Lys-326 is covalently cross-linked (Glycyl lysine isopeptide (Lys-Gly) (interchain with G-Cter in ubiquitin)). Arg-339 is subject to Omega-N-methylarginine. Residue Lys-370 forms a Glycyl lysine isopeptide (Lys-Gly) (interchain with G-Cter in ubiquitin) linkage. Residues 432–451 form a disordered region; the sequence is YEEVGVDSVEGEGEEEGEEY. Ser-439 is subject to Phosphoserine. Glu-443 and Glu-445 each carry 5-glutamyl polyglutamate. 3'-nitrotyrosine is present on Tyr-451.

The protein belongs to the tubulin family. As to quaternary structure, heterodimer of alpha- and beta-tubulin. A typical microtubule is a hollow water-filled tube with an outer diameter of 25 nm and an inner diameter of 15 nM. Alpha-beta heterodimers associate head-to-tail to form protofilaments running lengthwise along the microtubule wall with the beta-tubulin subunit facing the microtubule plus end conferring a structural polarity. Microtubules usually have 13 protofilaments but different protofilament numbers can be found in some organisms and specialized cells. Interacts with gamma-tubulin; the interaction allows microtubules to nucleate from the gamma-tubulin ring complex (gTuRC). Nascent microtubule interacts (via alpha-tubulin MREC motif) with TTC5/STRAP; this interaction may result in tubulin mRNA-targeted degradation. Component of sperm flagellar doublet microtubules. The cofactor is Mg(2+). Some glutamate residues at the C-terminus are polyglutamylated, resulting in polyglutamate chains on the gamma-carboxyl group. Polyglutamylation plays a key role in microtubule severing by spastin (SPAST). SPAST preferentially recognizes and acts on microtubules decorated with short polyglutamate tails: severing activity by SPAST increases as the number of glutamates per tubulin rises from one to eight, but decreases beyond this glutamylation threshold. Glutamylation is also involved in cilia motility. In terms of processing, some glutamate residues at the C-terminus are monoglycylated but not polyglycylated due to the absence of functional TTLL10 in human. Monoglycylation is mainly limited to tubulin incorporated into cilia and flagella axonemes, which is required for their stability and maintenance. Flagella glycylation controls sperm motility. Both polyglutamylation and monoglycylation can coexist on the same protein on adjacent residues, and lowering glycylation levels increases polyglutamylation, and reciprocally. Post-translationally, acetylation of alpha chains at Lys-40 is located inside the microtubule lumen. This modification has been correlated with increased microtubule stability, intracellular transport and ciliary assembly. Methylation of alpha chains at Lys-40 is found in mitotic microtubules and is required for normal mitosis and cytokinesis contributing to genomic stability. In terms of processing, nitration of Tyr-451 is irreversible and interferes with normal dynein intracellular distribution. Post-translationally, undergoes a tyrosination/detyrosination cycle, the cyclic removal and re-addition of a C-terminal tyrosine residue by the enzymes tubulin tyrosine carboxypeptidase (MATCAP1/KIAA0895L, VASH1 or VASH2) and tubulin tyrosine ligase (TTL), respectively. Tyrosination promotes microtubule interaction with CAP-Gly domain-containing proteins such as CLIP1, CLIP2 and DCTN1. Tyrosination regulates the initiation of dynein-dynactin motility via interaction with DCTN1, which brings the dynein-dynactin complex into contact with microtubules. In neurons, tyrosinated tubulins mediate the initiation of retrograde vesicle transport. In terms of processing, detyrosination is involved in metaphase plate congression by guiding chromosomes during mitosis: detyrosination promotes interaction with CENPE, promoting pole-proximal transport of chromosomes toward the equator. Detyrosination increases microtubules-dependent mechanotransduction in dystrophic cardiac and skeletal muscle. In cardiomyocytes, detyrosinated microtubules are required to resist to contractile compression during contraction: detyrosination promotes association with desmin (DES) at force-generating sarcomeres, leading to buckled microtubules and mechanical resistance to contraction.

It localises to the cytoplasm. It is found in the cytoskeleton. It carries out the reaction GTP + H2O = GDP + phosphate + H(+). In terms of biological role, tubulin is the major constituent of microtubules, protein filaments consisting of alpha- and beta-tubulin heterodimers. Microtubules grow by the addition of GTP-tubulin dimers to the microtubule end, where a stabilizing cap forms. Below the cap, tubulin dimers are in GDP-bound state, owing to GTPase activity of alpha-tubulin. This Homo sapiens (Human) protein is Tubulin alpha-1B chain (TUBA1B).